A 332-amino-acid chain; its full sequence is MKVTFEELKGAFYRVLRSRNIAEDTADACAEMFARTTESGVYSHGVNRFPRFIQQLDNGDIIPDAKPQRVTSLGAIEQWDAQRAIGNLTAKKMMDRAIELASDHGIGLVALRNANHWMRGGSYGWQAAEKGYIGICWTNSIAVMPPWGAKECRIGTNPLIVAIPSTPITMVDMSMSMFSYGMLEVNRLAGRELPVDGGFDDNGQLTKEPGVIEKNHRILPMGYWKGSGLSIVLDMIATLLSNGSSVAEVTQENSDEYGVSQIFIAIEVDKLIDGATRDAKLQRIMDFITTAERADDNVAIRLPGHEFTKLLDDSRCNGITIDDSVWAKIQAL.

Residue histidine 44 is the Proton donor of the active site. Residues 168 to 174, 224 to 225, and 304 to 306 contribute to the NAD(+) site; these read ITMVDMS, WK, and GHE.

It belongs to the LDH2/MDH2 oxidoreductase family. DlgD subfamily. In terms of assembly, homodimer.

The protein resides in the cytoplasm. The catalysed reaction is 3-dehydro-L-gulonate + NAD(+) = 2,3-dioxo-L-gulonate + NADH + H(+). It carries out the reaction 3-dehydro-L-gulonate + NADP(+) = 2,3-dioxo-L-gulonate + NADPH + H(+). Its function is as follows. Catalyzes the reduction of 2,3-diketo-L-gulonate in the presence of NADH, to form 3-keto-L-gulonate. This chain is 2,3-diketo-L-gulonate reductase, found in Salmonella typhi.